The sequence spans 949 residues: Glycine dehydrogenase (decarboxylating) (949 aa).

K699 carries the N6-(pyridoxal phosphate)lysine modification.

Belongs to the GcvP family. As to quaternary structure, the glycine cleavage system is composed of four proteins: P, T, L and H. The cofactor is pyridoxal 5'-phosphate.

It catalyses the reaction N(6)-[(R)-lipoyl]-L-lysyl-[glycine-cleavage complex H protein] + glycine + H(+) = N(6)-[(R)-S(8)-aminomethyldihydrolipoyl]-L-lysyl-[glycine-cleavage complex H protein] + CO2. Its function is as follows. The glycine cleavage system catalyzes the degradation of glycine. The P protein binds the alpha-amino group of glycine through its pyridoxal phosphate cofactor; CO(2) is released and the remaining methylamine moiety is then transferred to the lipoamide cofactor of the H protein. In Roseobacter denitrificans (strain ATCC 33942 / OCh 114) (Erythrobacter sp. (strain OCh 114)), this protein is Glycine dehydrogenase (decarboxylating).